The chain runs to 384 residues: Putative exopolyphosphatase (384 aa).

Mn(2+) is bound by residues D40, D42, D116, H138, and D200.

This sequence belongs to the PPase class C family. Mn(2+) is required as a cofactor.

It carries out the reaction [phosphate](n) + H2O = [phosphate](n-1) + phosphate + H(+). In terms of biological role, degradation of inorganic polyphosphates. In Schizosaccharomyces pombe (strain 972 / ATCC 24843) (Fission yeast), this protein is Putative exopolyphosphatase.